The sequence spans 913 residues: Alanine--tRNA ligase (913 aa).

Residues His608, His612, Cys711, and His715 each coordinate Zn(2+).

This sequence belongs to the class-II aminoacyl-tRNA synthetase family. It depends on Zn(2+) as a cofactor.

The protein resides in the cytoplasm. The enzyme catalyses tRNA(Ala) + L-alanine + ATP = L-alanyl-tRNA(Ala) + AMP + diphosphate. In terms of biological role, catalyzes the attachment of alanine to tRNA(Ala) in a two-step reaction: alanine is first activated by ATP to form Ala-AMP and then transferred to the acceptor end of tRNA(Ala). Also edits incorrectly charged Ser-tRNA(Ala) and Gly-tRNA(Ala) via its editing domain. This Methanocorpusculum labreanum (strain ATCC 43576 / DSM 4855 / Z) protein is Alanine--tRNA ligase.